Reading from the N-terminus, the 215-residue chain is ER lumen protein-retaining receptor B (215 aa).

Helical transmembrane passes span 6–26, 55–77, 98–118, 120–140, 149–169, and 178–198; these read LAGD…IHTI, FVSL…IVWY, WFLV…FTFL, VLWT…LVLL, LTGQ…LNWI, and FVHW…ADFF.

This sequence belongs to the ERD2 family.

Its subcellular location is the golgi apparatus membrane. It localises to the endoplasmic reticulum membrane. Determines the specificity of the luminal endoplasmic reticulum protein retention system. Required for the retro-transport of calreticulin-3 (CRT3) from the Golgi to the ER. Specifically required for elongation factor Tu receptor (EFR) function in response to the pathogen-associated molecular pattern (PAMP) elf18. In Arabidopsis thaliana (Mouse-ear cress), this protein is ER lumen protein-retaining receptor B (ERD2B).